The chain runs to 80 residues: Small ribosomal subunit protein bS18 (80 aa).

Belongs to the bacterial ribosomal protein bS18 family. As to quaternary structure, part of the 30S ribosomal subunit. Forms a tight heterodimer with protein bS6.

Functionally, binds as a heterodimer with protein bS6 to the central domain of the 16S rRNA, where it helps stabilize the platform of the 30S subunit. This chain is Small ribosomal subunit protein bS18, found in Staphylococcus haemolyticus (strain JCSC1435).